A 120-amino-acid polypeptide reads, in one-letter code: Large ribosomal subunit protein bL19c (120 aa).

It belongs to the bacterial ribosomal protein bL19 family.

The protein localises to the plastid. It localises to the chloroplast. In Thalassiosira weissflogii (Marine diatom), this protein is Large ribosomal subunit protein bL19c.